The chain runs to 298 residues: Ethanolamine ammonia-lyase small subunit (298 aa).

Adenosylcob(III)alamin contacts are provided by Val-210, Glu-231, and Cys-261.

This sequence belongs to the EutC family. The basic unit is a heterodimer which dimerizes to form tetramers. The heterotetramers trimerize; 6 large subunits form a core ring with 6 small subunits projecting outwards. Adenosylcob(III)alamin serves as cofactor.

Its subcellular location is the bacterial microcompartment. The catalysed reaction is ethanolamine = acetaldehyde + NH4(+). The protein operates within amine and polyamine degradation; ethanolamine degradation. Catalyzes the deamination of various vicinal amino-alcohols to oxo compounds. Allows this organism to utilize ethanolamine as the sole source of nitrogen and carbon in the presence of external vitamin B12. The sequence is that of Ethanolamine ammonia-lyase small subunit from Salmonella dublin (strain CT_02021853).